A 409-amino-acid polypeptide reads, in one-letter code: Peptidase T (409 aa).

His78 provides a ligand contact to Zn(2+). Residue Asp80 is part of the active site. Zn(2+) is bound at residue Asp141. The active-site Proton acceptor is the Glu175. Zn(2+)-binding residues include Glu176, Asp198, and His380.

The protein belongs to the peptidase M20B family. It depends on Zn(2+) as a cofactor.

The protein resides in the cytoplasm. It carries out the reaction Release of the N-terminal residue from a tripeptide.. Its function is as follows. Cleaves the N-terminal amino acid of tripeptides. The chain is Peptidase T from Caldanaerobacter subterraneus subsp. tengcongensis (strain DSM 15242 / JCM 11007 / NBRC 100824 / MB4) (Thermoanaerobacter tengcongensis).